A 510-amino-acid chain; its full sequence is Probable cytosol aminopeptidase (510 aa).

Lysine 272 and aspartate 277 together coordinate Mn(2+). Residue lysine 284 is part of the active site. Mn(2+) is bound by residues aspartate 296, aspartate 355, and glutamate 357. Residue arginine 359 is part of the active site.

Belongs to the peptidase M17 family. The cofactor is Mn(2+).

The protein localises to the cytoplasm. It catalyses the reaction Release of an N-terminal amino acid, Xaa-|-Yaa-, in which Xaa is preferably Leu, but may be other amino acids including Pro although not Arg or Lys, and Yaa may be Pro. Amino acid amides and methyl esters are also readily hydrolyzed, but rates on arylamides are exceedingly low.. The enzyme catalyses Release of an N-terminal amino acid, preferentially leucine, but not glutamic or aspartic acids.. In terms of biological role, presumably involved in the processing and regular turnover of intracellular proteins. Catalyzes the removal of unsubstituted N-terminal amino acids from various peptides. The sequence is that of Probable cytosol aminopeptidase from Synechococcus sp. (strain JA-2-3B'a(2-13)) (Cyanobacteria bacterium Yellowstone B-Prime).